The primary structure comprises 306 residues: tRNA dimethylallyltransferase 1 (306 aa).

15 to 22 (GPTGSGKS) contributes to the ATP binding site. 17-22 (TGSGKS) is a substrate binding site. The interval 40 to 43 (DSMQ) is interaction with substrate tRNA.

The protein belongs to the IPP transferase family. In terms of assembly, monomer. Requires Mg(2+) as cofactor.

It catalyses the reaction adenosine(37) in tRNA + dimethylallyl diphosphate = N(6)-dimethylallyladenosine(37) in tRNA + diphosphate. Catalyzes the transfer of a dimethylallyl group onto the adenine at position 37 in tRNAs that read codons beginning with uridine, leading to the formation of N6-(dimethylallyl)adenosine (i(6)A). This Citrifermentans bemidjiense (strain ATCC BAA-1014 / DSM 16622 / JCM 12645 / Bem) (Geobacter bemidjiensis) protein is tRNA dimethylallyltransferase 1.